The primary structure comprises 186 residues: Alkyl hydroperoxide reductase AhpD (186 aa).

Cysteine 132 functions as the Proton donor in the catalytic mechanism. A disulfide bridge connects residues cysteine 132 and cysteine 135. The Cysteine sulfenic acid (-SOH) intermediate role is filled by cysteine 135.

Belongs to the AhpD family.

It catalyses the reaction N(6)-[(R)-dihydrolipoyl]-L-lysyl-[lipoyl-carrier protein] + a hydroperoxide = N(6)-[(R)-lipoyl]-L-lysyl-[lipoyl-carrier protein] + an alcohol + H2O. In terms of biological role, antioxidant protein with alkyl hydroperoxidase activity. Required for the reduction of the AhpC active site cysteine residues and for the regeneration of the AhpC enzyme activity. The protein is Alkyl hydroperoxide reductase AhpD of Anaeromyxobacter sp. (strain K).